Reading from the N-terminus, the 180-residue chain is NADH-quinone oxidoreductase subunit I (180 aa).

2 consecutive 4Fe-4S ferredoxin-type domains span residues 50–80 and 90–119; these read LTRDPDGEERCVACNLCAVACPVGCISLQKA and EFFRINFSRCIFCGLCEEACPTTAIQLTPD. [4Fe-4S] cluster-binding residues include Cys60, Cys63, Cys66, Cys70, Cys99, Cys102, Cys105, and Cys109.

Belongs to the complex I 23 kDa subunit family. As to quaternary structure, NDH-1 is composed of 13 different subunits. Subunits NuoA, H, J, K, L, M, N constitute the membrane sector of the complex. Requires [4Fe-4S] cluster as cofactor.

It localises to the cell inner membrane. The catalysed reaction is a quinone + NADH + 5 H(+)(in) = a quinol + NAD(+) + 4 H(+)(out). In terms of biological role, NDH-1 shuttles electrons from NADH, via FMN and iron-sulfur (Fe-S) centers, to quinones in the respiratory chain. The immediate electron acceptor for the enzyme in this species is believed to be ubiquinone. Couples the redox reaction to proton translocation (for every two electrons transferred, four hydrogen ions are translocated across the cytoplasmic membrane), and thus conserves the redox energy in a proton gradient. This is NADH-quinone oxidoreductase subunit I from Yersinia enterocolitica serotype O:8 / biotype 1B (strain NCTC 13174 / 8081).